The sequence spans 268 residues: 3-methyl-2-oxobutanoate hydroxymethyltransferase (268 aa).

Aspartate 44 and aspartate 83 together coordinate Mg(2+). 3-methyl-2-oxobutanoate contacts are provided by residues 44–45 (DS), aspartate 83, and lysine 113. Mg(2+) is bound at residue glutamate 115. The active-site Proton acceptor is glutamate 182.

This sequence belongs to the PanB family. As to quaternary structure, homodecamer; pentamer of dimers. Mg(2+) is required as a cofactor.

It localises to the cytoplasm. The enzyme catalyses 3-methyl-2-oxobutanoate + (6R)-5,10-methylene-5,6,7,8-tetrahydrofolate + H2O = 2-dehydropantoate + (6S)-5,6,7,8-tetrahydrofolate. It participates in cofactor biosynthesis; (R)-pantothenate biosynthesis; (R)-pantoate from 3-methyl-2-oxobutanoate: step 1/2. In terms of biological role, catalyzes the reversible reaction in which hydroxymethyl group from 5,10-methylenetetrahydrofolate is transferred onto alpha-ketoisovalerate to form ketopantoate. The chain is 3-methyl-2-oxobutanoate hydroxymethyltransferase from Synechococcus elongatus (strain ATCC 33912 / PCC 7942 / FACHB-805) (Anacystis nidulans R2).